A 96-amino-acid polypeptide reads, in one-letter code: Co-chaperonin GroES (96 aa).

This sequence belongs to the GroES chaperonin family. In terms of assembly, heptamer of 7 subunits arranged in a ring. Interacts with the chaperonin GroEL.

It localises to the cytoplasm. In terms of biological role, together with the chaperonin GroEL, plays an essential role in assisting protein folding. The GroEL-GroES system forms a nano-cage that allows encapsulation of the non-native substrate proteins and provides a physical environment optimized to promote and accelerate protein folding. GroES binds to the apical surface of the GroEL ring, thereby capping the opening of the GroEL channel. This Neisseria gonorrhoeae (strain ATCC 700825 / FA 1090) protein is Co-chaperonin GroES.